Here is a 130-residue protein sequence, read N- to C-terminus: Protein NrdI (130 aa).

Belongs to the NrdI family.

Functionally, probably involved in ribonucleotide reductase function. In Staphylococcus carnosus (strain TM300), this protein is Protein NrdI.